The following is a 218-amino-acid chain: Probable transaldolase (218 aa).

The active-site Schiff-base intermediate with substrate is the K83.

This sequence belongs to the transaldolase family. Type 3B subfamily.

It localises to the cytoplasm. The enzyme catalyses D-sedoheptulose 7-phosphate + D-glyceraldehyde 3-phosphate = D-erythrose 4-phosphate + beta-D-fructose 6-phosphate. It participates in carbohydrate degradation; pentose phosphate pathway; D-glyceraldehyde 3-phosphate and beta-D-fructose 6-phosphate from D-ribose 5-phosphate and D-xylulose 5-phosphate (non-oxidative stage): step 2/3. Functionally, transaldolase is important for the balance of metabolites in the pentose-phosphate pathway. The sequence is that of Probable transaldolase from Kosmotoga olearia (strain ATCC BAA-1733 / DSM 21960 / TBF 19.5.1).